A 346-amino-acid polypeptide reads, in one-letter code: MALMLSRIPRRFFFLFLTVGLIAGAFLYSLIYFVDVDLVSKVNQLYDQQIAPMLSDAIGTPSVNHSFELAPLDSHLVATSTTFHEASYESEPQQNPASQNIVLLLVSDGHTSYNNGANTFEEAIQNRVDYSTKQNYNFEYVNVTGLPIPAVWSKMPAVLQTMKKYPKAEWIWLLDQDAIITNTHLSLQDSFLKPENLQKTLITNTILTKRPINANGDLRYTPSNYSLKDIENLMVIISQDHNGLNAGSILFRNSPATALFLDIWTDPVVAECAKANNEQDMLGYLISKHSQLASLVGLIPQRKINAFHEGPENMEWQKGDLVIHFAGCWVENRCDELWQKFYALID.

At 1 to 11 the chain is on the cytoplasmic side; the sequence is MALMLSRIPRR. Residues 12-32 form a helical; Signal-anchor for type II membrane protein membrane-spanning segment; the sequence is FFFLFLTVGLIAGAFLYSLIY. The Lumenal portion of the chain corresponds to 33–346; that stretch reads FVDVDLVSKV…LWQKFYALID (314 aa). Asn-64, Asn-142, and Asn-224 each carry an N-linked (GlcNAc...) asparagine glycan.

The protein belongs to the glycosyltransferase 34 family.

It localises to the golgi apparatus membrane. The sequence is that of Probable alpha-1,2-galactosyltransferase gmh2 (gmh2) from Schizosaccharomyces pombe (strain 972 / ATCC 24843) (Fission yeast).